The primary structure comprises 586 residues: Zinc finger protein Eos (586 aa).

Disordered stretches follow at residues 1–42 (MHTP…APDF) and 68–98 (EKEFLGAPVGPSVSTPNSQHSSPSRSLSANS). Over residues 25–34 (QGKDNLEREL) the composition is skewed to basic and acidic residues. The segment covering 79 to 98 (SVSTPNSQHSSPSRSLSANS) has biased composition (polar residues). A Glycyl lysine isopeptide (Lys-Gly) (interchain with G-Cter in SUMO2) cross-link involves residue Lys-100. At Ser-105 the chain carries Phosphoserine. 4 consecutive C2H2-type zinc fingers follow at residues 159–181 (LKCDVCGMVCIGPNVLMVHKRSH), 187–209 (FHCNQCGASFTQKGNLLRHIKLH), 215–237 (FKCPFCNYACRRRDALTGHLRTH), and 248–271 (YKCNYCGRSYKQQSTLEEHKERCH). The interval 281–586 (AQALTGQPGD…HIVRGEHKVG (306 aa)) is interaction with FOXP3. Lys-335 carries the N6-acetyllysine modification. Residues 413–490 (RLELPGSREA…QPPPTIVVGR (78 aa)) form a disordered region. A CTBP-binding motif PEDLG motif is present at residues 423 to 433 (GEGPEDLGDGG). The span at 476–485 (QGPPPQPPPT) shows a compositional bias: pro residues. Lys-501 participates in a covalent cross-link: Glycyl lysine isopeptide (Lys-Gly) (interchain with G-Cter in SUMO2). 2 consecutive C2H2-type zinc fingers follow at residues 531 to 553 (FKCEHCRILFLDHVMFTIHMGCH) and 559 to 583 (FECNICGYHSQDRYEFSSHIVRGEH).

It belongs to the Ikaros C2H2-type zinc-finger protein family. In terms of assembly, self-associates. Interacts with other family members; IKZF1, IKZF2, IKZF3 and IKZF5. Interacts with CTBP2, SPI1 and MITF. Interacts with FOXP3 and CTBP1. As to expression, expressed mainly in the brain. Up-regulated in long term cultured astrocytes. Down-regulated during osteoclast differentiation.

The protein localises to the nucleus. Functionally, DNA-binding protein that binds to the 5'GGGAATRCC-3' Ikaros-binding sequence. Interacts with SPI1 and MITF to repress transcription of the CTSK and ACP5 promoters via recruitment of corepressors SIN3A and CTBP2. May be involved in the development of central and peripheral nervous systems. Essential for the inhibitory function of regulatory T-cells (Treg). Mediates FOXP3-mediated gene silencing in regulatory T-cells (Treg) via recruitment of corepressor CTBP1. The polypeptide is Zinc finger protein Eos (Ikzf4) (Mus musculus (Mouse)).